A 437-amino-acid chain; its full sequence is Ribosomal protein uS12 methylthiotransferase RimO (437 aa).

An MTTase N-terminal domain is found at 4–114 (PRVSFVSLGC…VMNAVHEVAP (111 aa)). Positions 13, 49, 78, 145, 149, and 152 each coordinate [4Fe-4S] cluster. The region spanning 131 to 369 (LTPRHYAYLK…MAKQQQISTN (239 aa)) is the Radical SAM core domain. Residues 372–437 (KKKVGKRLPV…DAYDLHGTAV (66 aa)) form the TRAM domain.

It belongs to the methylthiotransferase family. RimO subfamily. Requires [4Fe-4S] cluster as cofactor.

The protein resides in the cytoplasm. The catalysed reaction is L-aspartate(89)-[ribosomal protein uS12]-hydrogen + (sulfur carrier)-SH + AH2 + 2 S-adenosyl-L-methionine = 3-methylsulfanyl-L-aspartate(89)-[ribosomal protein uS12]-hydrogen + (sulfur carrier)-H + 5'-deoxyadenosine + L-methionine + A + S-adenosyl-L-homocysteine + 2 H(+). Functionally, catalyzes the methylthiolation of an aspartic acid residue of ribosomal protein uS12. This is Ribosomal protein uS12 methylthiotransferase RimO from Brucella abortus (strain S19).